Reading from the N-terminus, the 68-residue chain is ATP synthase F(0) complex subunit 8 (68 aa).

The chain crosses the membrane as a helical span at residues 8–24 (TWFTIIMAMLPTLYLIT). K54 is subject to N6-acetyllysine; alternate. K54 is subject to N6-succinyllysine; alternate. Position 57 is an N6-acetyllysine (K57).

The protein belongs to the ATPase protein 8 family. In terms of assembly, component of the ATP synthase complex composed at least of ATP5F1A/subunit alpha, ATP5F1B/subunit beta, ATP5MC1/subunit c (homooctomer), MT-ATP6/subunit a, MT-ATP8/subunit 8, ATP5ME/subunit e, ATP5MF/subunit f, ATP5MG/subunit g, ATP5MK/subunit k, ATP5MJ/subunit j, ATP5F1C/subunit gamma, ATP5F1D/subunit delta, ATP5F1E/subunit epsilon, ATP5PF/subunit F6, ATP5PB/subunit b, ATP5PD/subunit d, ATP5PO/subunit OSCP. ATP synthase complex consists of a soluble F(1) head domain (subunits alpha(3) and beta(3)) - the catalytic core - and a membrane F(0) domain - the membrane proton channel (subunits c, a, 8, e, f, g, k and j). These two domains are linked by a central stalk (subunits gamma, delta, and epsilon) rotating inside the F1 region and a stationary peripheral stalk (subunits F6, b, d, and OSCP). Interacts with PRICKLE3.

Its subcellular location is the mitochondrion membrane. Subunit 8, of the mitochondrial membrane ATP synthase complex (F(1)F(0) ATP synthase or Complex V) that produces ATP from ADP in the presence of a proton gradient across the membrane which is generated by electron transport complexes of the respiratory chain. ATP synthase complex consist of a soluble F(1) head domain - the catalytic core - and a membrane F(1) domain - the membrane proton channel. These two domains are linked by a central stalk rotating inside the F(1) region and a stationary peripheral stalk. During catalysis, ATP synthesis in the catalytic domain of F(1) is coupled via a rotary mechanism of the central stalk subunits to proton translocation. In vivo, can only synthesize ATP although its ATP hydrolase activity can be activated artificially in vitro. Part of the complex F(0) domain. In Papio hamadryas (Hamadryas baboon), this protein is ATP synthase F(0) complex subunit 8.